Reading from the N-terminus, the 214-residue chain is Pyridoxine/pyridoxamine 5'-phosphate oxidase (214 aa).

Substrate-binding positions include 9 to 12 (RKDY) and Lys-67. Residues 62–67 (RMVLLK), 77–78 (FT), Arg-83, Lys-84, and Gln-106 each bind FMN. Positions 124, 128, and 132 each coordinate substrate. FMN contacts are provided by residues 141–142 (QS) and Trp-186. 192-194 (RLH) serves as a coordination point for substrate. Residue Arg-196 coordinates FMN.

Belongs to the pyridoxamine 5'-phosphate oxidase family. In terms of assembly, homodimer. Requires FMN as cofactor.

The enzyme catalyses pyridoxamine 5'-phosphate + O2 + H2O = pyridoxal 5'-phosphate + H2O2 + NH4(+). It carries out the reaction pyridoxine 5'-phosphate + O2 = pyridoxal 5'-phosphate + H2O2. The protein operates within cofactor metabolism; pyridoxal 5'-phosphate salvage; pyridoxal 5'-phosphate from pyridoxamine 5'-phosphate: step 1/1. It participates in cofactor metabolism; pyridoxal 5'-phosphate salvage; pyridoxal 5'-phosphate from pyridoxine 5'-phosphate: step 1/1. Functionally, catalyzes the oxidation of either pyridoxine 5'-phosphate (PNP) or pyridoxamine 5'-phosphate (PMP) into pyridoxal 5'-phosphate (PLP). This is Pyridoxine/pyridoxamine 5'-phosphate oxidase from Trichormus variabilis (strain ATCC 29413 / PCC 7937) (Anabaena variabilis).